The primary structure comprises 822 residues: Valine--tRNA ligase (822 aa).

A 'HIGH' region motif is present at residues 41 to 51 (PNVTGQLHLGH). The 'KMSKS' region signature appears at 511–515 (KMSKS). An ATP-binding site is contributed by Lys514. The stretch at 765 to 822 (EQKGRELKEIQFLKSEILRAEKILTNKGFLEKAPREKIDLERTKLEKLKEKLVFYEKK) forms a coiled coil.

This sequence belongs to the class-I aminoacyl-tRNA synthetase family. ValS type 1 subfamily. Monomer.

It localises to the cytoplasm. The catalysed reaction is tRNA(Val) + L-valine + ATP = L-valyl-tRNA(Val) + AMP + diphosphate. Its function is as follows. Catalyzes the attachment of valine to tRNA(Val). As ValRS can inadvertently accommodate and process structurally similar amino acids such as threonine, to avoid such errors, it has a 'posttransfer' editing activity that hydrolyzes mischarged Thr-tRNA(Val) in a tRNA-dependent manner. In Mesomycoplasma hyopneumoniae (strain J / ATCC 25934 / NCTC 10110) (Mycoplasma hyopneumoniae), this protein is Valine--tRNA ligase.